The primary structure comprises 319 residues: Putative protein phosphatase 2C 23 (319 aa).

The PPM-type phosphatase domain occupies 73-314; that stretch reads AVRMESASCY…DDITVVVACI (242 aa). Residues Gly-102, Asp-235, and Asp-305 each contribute to the Mn(2+) site.

This sequence belongs to the PP2C family. It depends on Mg(2+) as a cofactor.

The catalysed reaction is O-phospho-L-seryl-[protein] + H2O = L-seryl-[protein] + phosphate. It carries out the reaction O-phospho-L-threonyl-[protein] + H2O = L-threonyl-[protein] + phosphate. The chain is Putative protein phosphatase 2C 23 from Oryza sativa subsp. japonica (Rice).